A 160-amino-acid polypeptide reads, in one-letter code: Large ribosomal subunit protein uL22c (160 aa).

The protein belongs to the universal ribosomal protein uL22 family. Part of the 50S ribosomal subunit.

The protein localises to the plastid. The protein resides in the chloroplast. This protein binds specifically to 23S rRNA. Functionally, the globular domain of the protein is located near the polypeptide exit tunnel on the outside of the subunit, while an extended beta-hairpin is found that lines the wall of the exit tunnel in the center of the 70S ribosome. This is Large ribosomal subunit protein uL22c (rpl22) from Crucihimalaya wallichii (Rock-cress).